The sequence spans 177 residues: Large ribosomal subunit protein uL6 (177 aa).

The protein belongs to the universal ribosomal protein uL6 family. As to quaternary structure, part of the 50S ribosomal subunit.

Functionally, this protein binds to the 23S rRNA, and is important in its secondary structure. It is located near the subunit interface in the base of the L7/L12 stalk, and near the tRNA binding site of the peptidyltransferase center. In Rickettsia typhi (strain ATCC VR-144 / Wilmington), this protein is Large ribosomal subunit protein uL6.